Reading from the N-terminus, the 55-residue chain is Large ribosomal subunit protein bL33 (55 aa).

It belongs to the bacterial ribosomal protein bL33 family.

This Kocuria rhizophila (strain ATCC 9341 / DSM 348 / NBRC 103217 / DC2201) protein is Large ribosomal subunit protein bL33.